A 2643-amino-acid chain; its full sequence is Ankyrin repeat domain-containing protein 11 (2643 aa).

Disordered stretches follow at residues 1 to 90 (MPKG…KEPV) and 128 to 170 (SANS…RGET). 2 stretches are compositionally biased toward basic and acidic residues: residues 21-54 (MVEK…VRER) and 69-90 (EQKD…KEPV). The segment covering 128 to 155 (SANSPVDTTPKHPSQSTVCQKGTPNSAS) has biased composition (polar residues). Residues 156–170 (KTKDKVNKRNERGET) show a composition bias toward basic and acidic residues. ANK repeat units follow at residues 167–196 (RGET…DVNV), 200–229 (AGWT…EVNT), 233–262 (DDDT…NPQQ), and 266–292 (KGET…YTSS). A Phosphoserine modification is found at Ser276. The tract at residues 289–365 (YTSSEESSTE…DRVPPVDDKH (77 aa)) is disordered. Acidic residues predominate over residues 295-305 (SSTESSEEEDA). Residues 309 to 320 (APSSSVDGNNTD) are compositionally biased toward polar residues. 2 stretches are compositionally biased toward basic and acidic residues: residues 322–335 (EFEK…KNPE) and 356–365 (DRVPPVDDKH). Ser408 carries the post-translational modification Phosphoserine. Phosphothreonine is present on Thr410. Phosphoserine is present on Ser411. 3 disordered regions span residues 423 to 504 (GEKL…CLKG), 517 to 651 (SLSA…GQCS), and 727 to 805 (DANK…DKEK). Positions 438-451 (KARESSSSRQQKEK) are enriched in basic and acidic residues. Basic residues predominate over residues 452 to 462 (NKLKKKRKKET). Over residues 463–475 (KGKEVRFGKRSDK) the composition is skewed to basic and acidic residues. Positions 484-494 (ESSESEEDDGD) are enriched in acidic residues. A compositionally biased stretch (low complexity) spans 517–528 (SLSASSTSSHGS). Residues 537–550 (GHTDQHTKHWRTDN) are compositionally biased toward basic and acidic residues. Residues 557 to 574 (PAWSEVSSLSDSSRTGLT) are compositionally biased toward polar residues. The span at 575–588 (SESDCSSEGSSVES) shows a compositional bias: low complexity. Basic residues-rich tracts occupy residues 591-602 (PTRRKQEHRKRG) and 633-646 (VKKH…KHKE). Phosphoserine is present on Ser838. Basic and acidic residues-rich tracts occupy residues 918–931 (KNSE…EKHK) and 938–962 (SEKD…IRSE). Disordered regions lie at residues 918–962 (KNSE…IRSE), 977–1037 (SFKD…STLD), and 1051–1074 (EKKD…FDQL). Ser1070 is subject to Phosphoserine. At Thr1111 the chain carries Phosphothreonine. A Phosphoserine modification is found at Ser1114. 2 disordered regions span residues 1114-1388 (SEDE…KDAS) and 1420-1711 (LFSS…TPSC). Composition is skewed to basic and acidic residues over residues 1133-1297 (DTQR…DKIS), 1326-1343 (AEDK…LREK), 1355-1388 (KSHE…KDAS), 1420-1444 (LFSS…KELK), 1464-1535 (RERW…KGDS), 1546-1564 (VPSR…KLLG), 1577-1587 (LSQKDLEIEER), and 1595-1640 (MKQM…KVKE). At Ser1676 the chain carries Phosphoserine. The segment covering 1678-1695 (RTEQSRPTGVPTPTSVVS) has biased composition (polar residues). 2 positions are modified to phosphoserine: Ser1777 and Ser1832. Tyr1835 and Tyr1836 each carry phosphotyrosine. Phosphoserine occurs at positions 1837 and 1844. Disordered regions lie at residues 1863–1900 (PPDS…GLPL), 1981–2027 (SPKH…EVKD), and 2111–2386 (HEAF…STQQ). A phosphoserine mark is found at Ser1981 and Ser2139. Composition is skewed to pro residues over residues 2150-2160 (PVPPAESPPGP) and 2175-2184 (EEPPAPPPQE). The span at 2273-2284 (SAEASCVVAAAE) shows a compositional bias: low complexity. Basic and acidic residues predominate over residues 2297–2315 (PEPKPTSEVPKAPKVEEVP). The segment at 2349-2643 (AKGRASEEED…VNDDFVLLPA (295 aa)) is important for protein degradation. Low complexity predominate over residues 2371–2386 (RSSQQLQQQLNTSTQQ).

Interacts with the PAS region of the p160 coactivators. In terms of processing, subject to proteasomal degradation which is probably essential to regulate its activity.

It localises to the nucleus. Chromatin regulator which modulates histone acetylation and gene expression in neural precursor cells. May recruit histone deacetylases (HDACs) to the p160 coactivators/nuclear receptor complex to inhibit ligand-dependent transactivation. Has a role in proliferation and development of cortical neural precursors. May also regulate bone homeostasis. In Mus musculus (Mouse), this protein is Ankyrin repeat domain-containing protein 11.